Consider the following 262-residue polypeptide: Tryptophan synthase alpha chain (262 aa).

Catalysis depends on proton acceptor residues Glu-48 and Asp-59.

Belongs to the TrpA family. In terms of assembly, tetramer of two alpha and two beta chains.

The enzyme catalyses (1S,2R)-1-C-(indol-3-yl)glycerol 3-phosphate + L-serine = D-glyceraldehyde 3-phosphate + L-tryptophan + H2O. The protein operates within amino-acid biosynthesis; L-tryptophan biosynthesis; L-tryptophan from chorismate: step 5/5. The alpha subunit is responsible for the aldol cleavage of indoleglycerol phosphate to indole and glyceraldehyde 3-phosphate. This chain is Tryptophan synthase alpha chain, found in Helicobacter pylori (strain HPAG1).